A 296-amino-acid polypeptide reads, in one-letter code: 4-hydroxybenzoate octaprenyltransferase (296 aa).

Transmembrane regions (helical) follow at residues 28–48 (PIGI…AGKG), 52–72 (LNTV…GCVI), 102–122 (ALVL…FTNS), 123–140 (TTIW…CYPF), 146–166 (YYPQ…AFTA), 169–189 (GELP…TVGY), 219–239 (VIIL…GSRF), 241–261 (LGAF…WEFW), and 275–295 (FLHN…DYAL).

The protein belongs to the UbiA prenyltransferase family. Mg(2+) serves as cofactor.

The protein localises to the cell inner membrane. It carries out the reaction all-trans-octaprenyl diphosphate + 4-hydroxybenzoate = 4-hydroxy-3-(all-trans-octaprenyl)benzoate + diphosphate. It functions in the pathway cofactor biosynthesis; ubiquinone biosynthesis. Functionally, catalyzes the prenylation of para-hydroxybenzoate (PHB) with an all-trans polyprenyl group. Mediates the second step in the final reaction sequence of ubiquinone-8 (UQ-8) biosynthesis, which is the condensation of the polyisoprenoid side chain with PHB, generating the first membrane-bound Q intermediate 3-octaprenyl-4-hydroxybenzoate. The sequence is that of 4-hydroxybenzoate octaprenyltransferase from Pseudomonas syringae pv. tomato (strain ATCC BAA-871 / DC3000).